A 309-amino-acid polypeptide reads, in one-letter code: Syndecan-1 (309 aa).

Residues 1-22 (MRRAALWLWLCALALRLQPVLP) form the signal peptide. The Extracellular portion of the chain corresponds to 23–253 (QIVTVNVPPE…GLLDRKEVLG (231 aa)). Disordered regions lie at residues 28–57 (NVPP…DITL) and 145–185 (TTAQ…GGTS). Acidic residues predominate over residues 32–42 (EDQDGSGDDSD). An O-linked (Xyl...) (chondroitin sulfate) serine glycan is attached at Ser37. A glycan (N-linked (GlcNAc...) asparagine) is linked at Asn43. Ser45 and Ser47 each carry an O-linked (Xyl...) (heparan sulfate) serine glycan. Residues 173 to 183 (GQPDQQPPSGG) are compositionally biased toward low complexity. Residues Ser205 and Ser215 are each glycosylated (O-linked (Xyl...) (chondroitin sulfate) serine). Residues 254–274 (GVIAGGLVGLIFAVCLVGFML) form a helical membrane-spanning segment. Residues 275–309 (YRMKKKDEGSYSLEEPKQANGGAYQKPTKQEEFYA) are Cytoplasmic-facing. Residues 283–309 (GSYSLEEPKQANGGAYQKPTKQEEFYA) form a disordered region. Ser284 carries the phosphoserine modification.

The protein belongs to the syndecan proteoglycan family. As to quaternary structure, interacts with CDCP1. Interacts (via C-terminus) with TIAM1 (via PDZ domain). Interacts with MDK. In terms of processing, shedding is enhanced by a number of factors such as heparanase, thrombin or EGF. Also by stress and wound healing. PMA-mediated shedding is inhibited by TIMP3.

It localises to the membrane. It is found in the secreted. The protein localises to the extracellular exosome. Cell surface proteoglycan that contains both heparan sulfate and chondroitin sulfate and that links the cytoskeleton to the interstitial matrix. Regulates exosome biogenesis in concert with SDCBP and PDCD6IP. Able to induce its own expression in dental mesenchymal cells and also in the neighboring dental epithelial cells via an MSX1-mediated pathway. The protein is Syndecan-1 of Mesocricetus auratus (Golden hamster).